The following is a 282-amino-acid chain: 4-diphosphocytidyl-2-C-methyl-D-erythritol kinase (282 aa).

Lys11 is a catalytic residue. Residue Pro95 to Ser105 participates in ATP binding. Residue Asp137 is part of the active site.

The protein belongs to the GHMP kinase family. IspE subfamily.

The catalysed reaction is 4-CDP-2-C-methyl-D-erythritol + ATP = 4-CDP-2-C-methyl-D-erythritol 2-phosphate + ADP + H(+). The protein operates within isoprenoid biosynthesis; isopentenyl diphosphate biosynthesis via DXP pathway; isopentenyl diphosphate from 1-deoxy-D-xylulose 5-phosphate: step 3/6. Catalyzes the phosphorylation of the position 2 hydroxy group of 4-diphosphocytidyl-2C-methyl-D-erythritol. The protein is 4-diphosphocytidyl-2-C-methyl-D-erythritol kinase of Haemophilus ducreyi (strain 35000HP / ATCC 700724).